The sequence spans 366 residues: Ribosomal RNA large subunit methyltransferase M (366 aa).

Residues S188, 221 to 224, D240, D260, and D277 each bind S-adenosyl-L-methionine; that span reads CPGG. K306 serves as the catalytic Proton acceptor.

Belongs to the class I-like SAM-binding methyltransferase superfamily. RNA methyltransferase RlmE family. RlmM subfamily. As to quaternary structure, monomer.

The protein localises to the cytoplasm. The enzyme catalyses cytidine(2498) in 23S rRNA + S-adenosyl-L-methionine = 2'-O-methylcytidine(2498) in 23S rRNA + S-adenosyl-L-homocysteine + H(+). Catalyzes the 2'-O-methylation at nucleotide C2498 in 23S rRNA. This Klebsiella pneumoniae subsp. pneumoniae (strain ATCC 700721 / MGH 78578) protein is Ribosomal RNA large subunit methyltransferase M.